The chain runs to 442 residues: UDP-N-acetylmuramate--L-alanine ligase (442 aa).

110–116 lines the ATP pocket; the sequence is GAHGKTS.

This sequence belongs to the MurCDEF family.

The protein localises to the cytoplasm. It catalyses the reaction UDP-N-acetyl-alpha-D-muramate + L-alanine + ATP = UDP-N-acetyl-alpha-D-muramoyl-L-alanine + ADP + phosphate + H(+). It participates in cell wall biogenesis; peptidoglycan biosynthesis. Functionally, cell wall formation. The sequence is that of UDP-N-acetylmuramate--L-alanine ligase from Streptococcus thermophilus (strain ATCC BAA-491 / LMD-9).